A 251-amino-acid polypeptide reads, in one-letter code: tRNA1(Val) (adenine(37)-N6)-methyltransferase (251 aa).

It belongs to the methyltransferase superfamily. tRNA (adenine-N(6)-)-methyltransferase family.

It localises to the cytoplasm. It catalyses the reaction adenosine(37) in tRNA1(Val) + S-adenosyl-L-methionine = N(6)-methyladenosine(37) in tRNA1(Val) + S-adenosyl-L-homocysteine + H(+). Functionally, specifically methylates the adenine in position 37 of tRNA(1)(Val) (anticodon cmo5UAC). This is tRNA1(Val) (adenine(37)-N6)-methyltransferase from Yersinia enterocolitica serotype O:8 / biotype 1B (strain NCTC 13174 / 8081).